Here is an 872-residue protein sequence, read N- to C-terminus: DNA mismatch repair protein MutS (872 aa).

623 to 630 contacts ATP; sequence GPNMAGKS.

It belongs to the DNA mismatch repair MutS family.

Its function is as follows. This protein is involved in the repair of mismatches in DNA. It is possible that it carries out the mismatch recognition step. This protein has a weak ATPase activity. In Trichlorobacter lovleyi (strain ATCC BAA-1151 / DSM 17278 / SZ) (Geobacter lovleyi), this protein is DNA mismatch repair protein MutS.